The primary structure comprises 128 residues: Translation initiation factor 5A (128 aa).

At lysine 35 the chain carries Hypusine.

Belongs to the eIF-5A family.

It is found in the cytoplasm. Its function is as follows. Functions by promoting the formation of the first peptide bond. The sequence is that of Translation initiation factor 5A (eif5a) from Archaeoglobus fulgidus (strain ATCC 49558 / DSM 4304 / JCM 9628 / NBRC 100126 / VC-16).